Here is a 540-residue protein sequence, read N- to C-terminus: Cytochrome bc1 complex cytochrome b subunit (540 aa).

The helical transmembrane segment at 40 to 60 threads the bilayer; that stretch reads EIALYSFIILLLTGVYLTLFF. Residues His105 and His119 each contribute to the heme site. A run of 3 helical transmembrane segments spans residues 109 to 129, 137 to 157, and 169 to 189; these read ALTF…TGAF, WIIG…GYSL, and IMSA…WLIF. 2 residues coordinate heme: His206 and His221. Helical transmembrane passes span 207 to 227, 259 to 279, 325 to 345, 371 to 391, and 408 to 428; these read VLII…LVWY, FGLV…INAI, AFWV…YPFI, LGVM…NDLF, and IGLI…CLGL.

This sequence belongs to the cytochrome b family. In terms of assembly, the cytochrome bc1 complex is composed of a cytochrome b (QcrB), the Rieske protein iron-sulfur (QcrA) and a diheme cytochrome c (QcrC) subunit. The cofactor is heme.

The protein localises to the cell membrane. It carries out the reaction a quinol + 2 Fe(III)-[cytochrome c](out) = a quinone + 2 Fe(II)-[cytochrome c](out) + 2 H(+)(out). Cytochrome b subunit of the cytochrome bc1 complex, an essential component of the respiratory electron transport chain required for ATP synthesis. The bc1 complex catalyzes the oxidation of menaquinol and the reduction of cytochrome c in the respiratory chain. The bc1 complex operates through a Q-cycle mechanism that couples electron transfer to generation of the proton gradient that drives ATP synthesis. The sequence is that of Cytochrome bc1 complex cytochrome b subunit (qcrB) from Corynebacterium diphtheriae (strain ATCC 700971 / NCTC 13129 / Biotype gravis).